Reading from the N-terminus, the 224-residue chain is 7-cyano-7-deazaguanine synthase (224 aa).

8-18 (LSGGMDSAAVI) serves as a coordination point for ATP. The Zn(2+) site is built by C186, C196, C199, and C202.

Belongs to the QueC family. Zn(2+) is required as a cofactor.

It catalyses the reaction 7-carboxy-7-deazaguanine + NH4(+) + ATP = 7-cyano-7-deazaguanine + ADP + phosphate + H2O + H(+). Its pathway is purine metabolism; 7-cyano-7-deazaguanine biosynthesis. Functionally, catalyzes the ATP-dependent conversion of 7-carboxy-7-deazaguanine (CDG) to 7-cyano-7-deazaguanine (preQ(0)). The chain is 7-cyano-7-deazaguanine synthase from Xanthomonas axonopodis pv. citri (strain 306).